We begin with the raw amino-acid sequence, 81 residues long: Cortexin-2 (81 aa).

The chain crosses the membrane as a helical span at residues 29–49 (TGFAFVGILCIFLGLLIIRCF).

It belongs to the cortexin family.

It is found in the membrane. This chain is Cortexin-2 (CTXN2), found in Homo sapiens (Human).